The chain runs to 305 residues: Acetaldehyde dehydrogenase (305 aa).

The active-site Acyl-thioester intermediate is C130. NAD(+) is bound by residues 161–169 (SVGPGTRKN) and N272.

Belongs to the acetaldehyde dehydrogenase family.

The catalysed reaction is acetaldehyde + NAD(+) + CoA = acetyl-CoA + NADH + H(+). This chain is Acetaldehyde dehydrogenase, found in Leptothrix cholodnii (strain ATCC 51168 / LMG 8142 / SP-6) (Leptothrix discophora (strain SP-6)).